Reading from the N-terminus, the 279-residue chain is Vitamin B12-binding protein (279 aa).

Positions 1-20 (MTFRFLCWLTGLLLCTAAYA) are cleaved as a signal peptide. The Fe/B12 periplasmic-binding domain occupies 24 to 276 (RVISLAPHAT…QLAELKLAPS (253 aa)). Cys189 and Cys265 are disulfide-bonded.

It belongs to the BtuF family. As to quaternary structure, the complex is composed of two ATP-binding proteins (BtuD), two transmembrane proteins (BtuC) and a solute-binding protein (BtuF).

Its subcellular location is the periplasm. Functionally, part of the ABC transporter complex BtuCDF involved in vitamin B12 import. Binds vitamin B12 and delivers it to the periplasmic surface of BtuC. The sequence is that of Vitamin B12-binding protein from Pectobacterium atrosepticum (strain SCRI 1043 / ATCC BAA-672) (Erwinia carotovora subsp. atroseptica).